The primary structure comprises 295 residues: Urease accessory protein UreD (295 aa).

This sequence belongs to the UreD family. As to quaternary structure, ureD, UreF and UreG form a complex that acts as a GTP-hydrolysis-dependent molecular chaperone, activating the urease apoprotein by helping to assemble the nickel containing metallocenter of UreC. The UreE protein probably delivers the nickel.

It localises to the cytoplasm. Required for maturation of urease via the functional incorporation of the urease nickel metallocenter. This Ralstonia nicotianae (strain ATCC BAA-1114 / GMI1000) (Ralstonia solanacearum) protein is Urease accessory protein UreD.